We begin with the raw amino-acid sequence, 316 residues long: Ribosomal protein L11 methyltransferase (316 aa).

4 residues coordinate S-adenosyl-L-methionine: Thr157, Gly178, Asp200, and Asn243.

This sequence belongs to the methyltransferase superfamily. PrmA family.

The protein resides in the cytoplasm. The catalysed reaction is L-lysyl-[protein] + 3 S-adenosyl-L-methionine = N(6),N(6),N(6)-trimethyl-L-lysyl-[protein] + 3 S-adenosyl-L-homocysteine + 3 H(+). In terms of biological role, methylates ribosomal protein L11. The polypeptide is Ribosomal protein L11 methyltransferase (Streptococcus pneumoniae (strain JJA)).